A 440-amino-acid polypeptide reads, in one-letter code: Cell division protein FtsA (440 aa).

Belongs to the FtsA/MreB family. In terms of assembly, self-interacts. Interacts with FtsZ.

The protein localises to the cell membrane. Cell division protein that is involved in the assembly of the Z ring. May serve as a membrane anchor for the Z ring. This is Cell division protein FtsA from Enterococcus faecalis (strain ATCC 700802 / V583).